A 469-amino-acid polypeptide reads, in one-letter code: MSRYSTISLFSGAGGLDLGFVQSGRFRIVFANEILLPAAVTYSRNLGLRLEVCGDEPRVEAQPGTIMACDVAKLDFTGLSGVDADVIIGGPPCQDFSIVRGPDWDRRGINVKRGRLYAHFVRALASLQPKAFVFENVPGLVSANRGLAYKVILEDFARLSIRWDEIKRIVSSNGNGGKVEGYEIVFTGIVDFSKLGVPQKRERLVIIGLRKDLAGGGFETISRLRARIDHVLSGKRWLLHRYPLTPIEVFEGQPLDRLGDKYKEVMLKWEGVWDEVGTERAFEWKRRVWDRLTFDIISDYLSFNGIKHADKQELEEALMQHEVLLKELGYYGRPVYSLKLPDSTTEPPYEGKAVVERMKRIPPDENHEFVRGTRWEVEGRGISLVYRRIHPLKPSYTVVAYGGGGTHGYHYDRDRATLTLRERARLQTFPDSFLFYGKKPEIRAQIGEAVPPLAAKRIAEALAEVLDAV.

Residues 4–469 (YSTISLFSGA…EALAEVLDAV (466 aa)) enclose the SAM-dependent MTase C5-type domain. Cysteine 93 is a catalytic residue.

The protein belongs to the class I-like SAM-binding methyltransferase superfamily. C5-methyltransferase family.

It catalyses the reaction a 2'-deoxycytidine in DNA + S-adenosyl-L-methionine = a 5-methyl-2'-deoxycytidine in DNA + S-adenosyl-L-homocysteine + H(+). In terms of biological role, cytosine methylase that recognizes the double-stranded sequence 5'-GC(A/T)GC-3', methylates C-5 position of the second cytosine on both strands, and protects the DNA from cleavage by the ApeKI endonuclease. The chain is DNA (cytosine-5-)-methyltransferase M.ApeKI from Aeropyrum pernix (strain ATCC 700893 / DSM 11879 / JCM 9820 / NBRC 100138 / K1).